A 498-amino-acid polypeptide reads, in one-letter code: MTEDIRVRYAPSPTGHLHIGNARTAIFNWLFARHYNGTFVIRIEDTDSARNIADGEKSQLENLAWLGLDWDESPDKPGVYGPYRQSERNEQGIYQEFIDALLASGQAYKSYKTSGQLASEREAQQAAKQAPHYVYEYEGLTNEEREAKYAEFEAQGLKPVVRFRVPEEQVYAWDDIVKGHIEIGAKEVGGDWVIQKADGMPTYNFAVVVDDHLMKISHVLRGDDHVSNTPKQIMIYEALGWDVPKFGHMALIINGETGKKLSKRDENLLQFVEQYKELGYQPQAMVNFIGLLGWSPKGEDEIFSLSEFKEMFDEKRLSKANAKFDQKKLEWVNNQWMRRDTDAVMPQLIQELVNAHLISADDAADKKKWLSEVIKVAGVDGISYTRQIVELVRKPFFELGDITDEMVEYLTSEDGRKVAAAWESTYESLPTDATPADYMSTIRAIQNDLEIKGRNLWNPIRIMTTHEVQGPNLPEMLTLLDKNTVLKTMRDVKEKYLA.

The 'HIGH' region motif lies at proline 11–asparagine 21. The 'KMSKS' region signature appears at lysine 260–arginine 264. An ATP-binding site is contributed by lysine 263.

This sequence belongs to the class-I aminoacyl-tRNA synthetase family. Glutamate--tRNA ligase type 1 subfamily. As to quaternary structure, monomer.

It is found in the cytoplasm. It catalyses the reaction tRNA(Glu) + L-glutamate + ATP = L-glutamyl-tRNA(Glu) + AMP + diphosphate. Its function is as follows. Catalyzes the attachment of glutamate to tRNA(Glu) in a two-step reaction: glutamate is first activated by ATP to form Glu-AMP and then transferred to the acceptor end of tRNA(Glu). The polypeptide is Glutamate--tRNA ligase (Leuconostoc mesenteroides subsp. mesenteroides (strain ATCC 8293 / DSM 20343 / BCRC 11652 / CCM 1803 / JCM 6124 / NCDO 523 / NBRC 100496 / NCIMB 8023 / NCTC 12954 / NRRL B-1118 / 37Y)).